Consider the following 444-residue polypeptide: Cholecystokinin receptor type A (444 aa).

The Extracellular portion of the chain corresponds to 1 to 56 (MSHSPARQHLVESSRMDVVDSLLMNGSNITPPCELGLENETLFCLDQPQPSKEWQS). Asn-25 and Asn-39 each carry an N-linked (GlcNAc...) asparagine glycan. A disulfide bridge links Cys-33 with Cys-44. The helical transmembrane segment at 57-82 (ALQILLYSIIFLLSVLGNTLVITVLI) threads the bilayer. The Cytoplasmic portion of the chain corresponds to 83–92 (RNKRMRTVTN). A helical membrane pass occupies residues 93–119 (IFLLSLAVSDLMLCLFCMPFNLIPNLL). Residues 120–130 (KDFIFGSAVCK) are Extracellular-facing. A disulfide bond links Cys-129 and Cys-211. The helical transmembrane segment at 131 to 152 (TTTYFMGTSVSVSTFNLVAISL) threads the bilayer. At 153 to 172 (ERYGAICRPLQSRVWQTKSH) the chain is on the cytoplasmic side. Residues 173-193 (ALKVIAATWCLSFTIMTPYPI) form a helical membrane-spanning segment. Over 194-225 (YSNLVPFTKNNNQTANMCRFLLPSDAMQQSWQ) the chain is Extracellular. Asn-205 carries N-linked (GlcNAc...) asparagine glycosylation. A helical transmembrane segment spans residues 226 to 249 (TFLLLILFLLPGIVMVVAYGLISL). At 250 to 329 (ELYQGIKFDA…NLIAKKRVIR (80 aa)) the chain is on the cytoplasmic side. The tract at residues 263–288 (KSAKEKKPSTGSSTRYEDSDGCYLQK) is disordered. A helical transmembrane segment spans residues 330-350 (MLIVIVVLFFLCWMPIFSANA). Topologically, residues 351–365 (WRAYDTVSAEKHLSG) are extracellular. A helical transmembrane segment spans residues 366 to 389 (TPISFILLLSYTSSCVNPIIYCFM). At 390-444 (NKRFRLGFMATFPCCPNPGPPGVRGEVGEEEDGRTIRALLSRYSYSHMSTSAPPP) the chain is on the cytoplasmic side. Cys-403 is lipidated: S-palmitoyl cysteine.

The protein belongs to the G-protein coupled receptor 1 family. As to expression, pancreas and brain. Also expressed in the gastrointestinal system and vagus nerve.

Its subcellular location is the cell membrane. In terms of biological role, receptor for cholecystokinin. Mediates pancreatic growth and enzyme secretion, smooth muscle contraction of the gall bladder and stomach. Has a 1000-fold higher affinity for CCK rather than for gastrin. It modulates feeding and dopamine-induced behavior in the central and peripheral nervous system. This receptor mediates its action by association with G proteins that activate a phosphatidylinositol-calcium second messenger system. This Rattus norvegicus (Rat) protein is Cholecystokinin receptor type A (Cckar).